The following is a 663-amino-acid chain: Heparan-alpha-glucosaminide N-acetyltransferase (663 aa).

Residues 1-24 (MTGARASAAEQRRAGRSGQARAAE) form a disordered region. Topologically, residues 1–190 (MTGARASAAE…LAVNEDPVDS (190 aa)) are lumenal, vesicle. Asn-94, Asn-142, and Asn-162 each carry an N-linked (GlcNAc...) asparagine glycan. Cys-151 and Cys-462 are oxidised to a cystine. A helical transmembrane segment spans residues 191 to 211 (NLPVSIAFLIGLAVIIVISFL). Topologically, residues 212–275 (RLLLSLDDFN…PRLRSVDTFR (64 aa)) are cytoplasmic. 2 positions are modified to phosphoserine: Ser-243 and Ser-245. A helical membrane pass occupies residues 276 to 296 (GIALILMVFVNYGGGKYWYFK). Residue His-297 is part of the active site. The Lumenal, vesicle portion of the chain corresponds to 297 to 302 (HASWNG). The helical transmembrane segment at 303–323 (LTVADLVFPWFVFIMGSSIFL) threads the bilayer. The Cytoplasmic segment spans residues 324–345 (SMTSILQRGCSKFRLLGKIAWR). The chain crosses the membrane as a helical span at residues 346-366 (SFLLICIGIIIVNPNYCLGPL). Residues 367–374 (SWDKVRIP) lie on the Lumenal, vesicle side of the membrane. The helical transmembrane segment at 375–395 (GVLQRLGVTYFVVAVLELLFA) threads the bilayer. At 396-420 (KPVPEHCASERSCLSLRDITSSWPQ) the chain is on the cytoplasmic side. The helical transmembrane segment at 421 to 441 (WLLILVLEGLWLGLTFLLPVP) threads the bilayer. Topologically, residues 442–500 (GCPTGYLGPGGIGDFGKYPNCTGGAAGYIDRLLLGDDHLYQHPSSAVLYHTEVAYDPEG) are lumenal, vesicle. Residues 501-521 (ILGTINSIVMAFLGVQAGKIL) form a helical membrane-spanning segment. Over 522-529 (LYYKARTK) the chain is Cytoplasmic. Residues 530–550 (DILIRFTAWCCILGLISVALT) form a helical membrane-spanning segment. Residues 551 to 564 (KVSENEGFIPVNKN) lie on the Lumenal, vesicle side of the membrane. Residues 565 to 585 (LWSLSYVTTLSSFAFFILLVL) traverse the membrane as a helical segment. Residues 586–592 (YPVVDVK) lie on the Cytoplasmic side of the membrane. The helical transmembrane segment at 593–613 (GLWTGTPFFYPGMNSILVYVG) threads the bilayer. The Lumenal, vesicle segment spans residues 614-634 (HEVFENYFPFQWKLKDNQSHK). A lysosomal targeting region region spans residues 624-635 (QWKLKDNQSHKE). A helical membrane pass occupies residues 635–655 (EHLTQNIVATALWVLIAYILY). The Cytoplasmic portion of the chain corresponds to 656 to 663 (RKKIFWKI).

As to quaternary structure, homooligomer. Homooligomerization is necessary for enzyme activity. Post-translationally, undergoes intralysosomal proteolytic cleavage; occurs within the end of the first and/or the beginning of the second luminal domain and is essential for the activation of the enzyme. In terms of processing, glycosylated. In terms of tissue distribution, widely expressed, with highest level in leukocytes, heart, liver, skeletal muscle, lung, placenta and liver.

It is found in the lysosome membrane. The catalysed reaction is alpha-D-glucosaminyl-[heparan sulfate](n) + acetyl-CoA = N-acetyl-alpha-D-glucosaminyl-[heparan sulfate](n) + CoA + H(+). Lysosomal acetyltransferase that acetylates the non-reducing terminal alpha-glucosamine residue of intralysosomal heparin or heparan sulfate, converting it into a substrate for luminal alpha-N-acetyl glucosaminidase. The sequence is that of Heparan-alpha-glucosaminide N-acetyltransferase (HGSNAT) from Homo sapiens (Human).